A 147-amino-acid polypeptide reads, in one-letter code: Hemoglobin subunit beta (147 aa).

The 145-residue stretch at 3–147 (EWTDDERAII…VVSALGRQYH (145 aa)) folds into the Globin domain. His-64 and His-93 together coordinate heme b.

The protein belongs to the globin family. As to quaternary structure, heterotetramer of two alpha chains and two beta chains. In terms of tissue distribution, red blood cells.

Its function is as follows. Involved in oxygen transport from gills to the various peripheral tissues. This chain is Hemoglobin subunit beta (hbb), found in Merlangius merlangus (Whiting).